A 237-amino-acid chain; its full sequence is Thrombin-like enzyme agkihpin-1 (237 aa).

M1 is a propeptide. The region spanning 2-228 is the Peptidase S1 domain; that stretch reads ILGDDECNIN…HLDWIENIIA (227 aa). Cysteines 27 and 43 form a disulfide. The active-site Charge relay system is the H42. N-linked (GlcNAc...) asparagine glycosylation occurs at N80. D87 (charge relay system) is an active-site residue. 3 cysteine pairs are disulfide-bonded: C119/C189, C151/C168, and C179/C204. S183 serves as the catalytic Charge relay system.

It belongs to the peptidase S1 family. Snake venom subfamily. As to expression, expressed by the venom gland.

It is found in the secreted. With respect to regulation, the hydrolysis of TAMe (tosyl-arginine methyl ester) substrate is activated by Ca(2+), Fe(3+), Mg(2+) and Zn(2+), and inhibited by EDTA, PMSF and DTT. Its function is as follows. Thrombin-like enzyme that shows fibrinogenolytic activity against bovine fibrinogen alpha and beta chains, but not gamma chain. Hydrolyzes fibrin. Enhances ADP-induced human platelet aggregation. Has arginine esterase activity for TAMe (tosyl-arginine methyl ester) substrate. Reduces thrombin-induced thrombosis. Does not have hemorrhagic activity. Reduces the motility of human liver cancer HepG2 cells in a wound-healing assay. The chain is Thrombin-like enzyme agkihpin-1 from Gloydius halys (Chinese water mocassin).